Consider the following 62-residue polypeptide: UPF0291 protein CLK_1994 (62 aa).

It belongs to the UPF0291 family.

The protein resides in the cytoplasm. The sequence is that of UPF0291 protein CLK_1994 from Clostridium botulinum (strain Loch Maree / Type A3).